Here is a 145-residue protein sequence, read N- to C-terminus: Large ribosomal subunit protein bL19 (145 aa).

The protein belongs to the bacterial ribosomal protein bL19 family.

Functionally, this protein is located at the 30S-50S ribosomal subunit interface and may play a role in the structure and function of the aminoacyl-tRNA binding site. In Brucella anthropi (strain ATCC 49188 / DSM 6882 / CCUG 24695 / JCM 21032 / LMG 3331 / NBRC 15819 / NCTC 12168 / Alc 37) (Ochrobactrum anthropi), this protein is Large ribosomal subunit protein bL19.